Here is a 432-residue protein sequence, read N- to C-terminus: Homogentisate 1,2-dioxygenase (432 aa).

His287 serves as the catalytic Proton acceptor. His330 and Glu336 together coordinate Fe cation. 2 residues coordinate homogentisate: Tyr345 and His366. Residue His366 participates in Fe cation binding.

It belongs to the homogentisate dioxygenase family. In terms of assembly, hexamer; dimer of trimers. The cofactor is Fe cation.

It catalyses the reaction homogentisate + O2 = 4-maleylacetoacetate + H(+). Its pathway is amino-acid degradation; L-phenylalanine degradation; acetoacetate and fumarate from L-phenylalanine: step 4/6. Functionally, involved in the catabolism of homogentisate (2,5-dihydroxyphenylacetate or 2,5-OH-PhAc), a central intermediate in the degradation of phenylalanine and tyrosine. Catalyzes the oxidative ring cleavage of the aromatic ring of homogentisate to yield maleylacetoacetate. In Pseudomonas aeruginosa (strain ATCC 15692 / DSM 22644 / CIP 104116 / JCM 14847 / LMG 12228 / 1C / PRS 101 / PAO1), this protein is Homogentisate 1,2-dioxygenase.